A 118-amino-acid chain; its full sequence is MAAPPEPGEPEERKSLKLLGFLDVENTPCARHSILYGSLGSVVAGFGHFLFTSRIRRSCDVGVGGFILVTLGCWFHCRYNYAKQRIQERIAREEIKKKILYEGTHLDPERKHNGSSSN.

At alanine 2 the chain carries N-acetylalanine. Over 2 to 33 (AAPPEPGEPEERKSLKLLGFLDVENTPCARHS) the chain is Mitochondrial intermembrane. A helical transmembrane segment spans residues 34–51 (ILYGSLGSVVAGFGHFLF). The Mitochondrial matrix portion of the chain corresponds to 52 to 60 (TSRIRRSCD). The helical transmembrane segment at 61 to 77 (VGVGGFILVTLGCWFHC) threads the bilayer. Topologically, residues 78 to 118 (RYNYAKQRIQERIAREEIKKKILYEGTHLDPERKHNGSSSN) are mitochondrial intermembrane.

It belongs to the COX20 family. As to quaternary structure, found in a complex with TMEM177, COA6, MT-CO2/COX2, COX18, SCO1 and SCO2. Interacts with SCO1, SCO2 and COA6 in a MT-CO2/COX2- and COX18-dependent manner. Interacts with COX18 in a MT-CO2/COX2-dependent manner. Interacts with MT-CO2/COX2. Interacts with TMEM177.

It localises to the mitochondrion inner membrane. In terms of biological role, essential for the assembly of the mitochondrial respiratory chain complex IV (CIV), also known as cytochrome c oxidase. Acts as a chaperone in the early steps of cytochrome c oxidase subunit II (MT-CO2/COX2) maturation, stabilizing the newly synthesized protein and presenting it to metallochaperones SCO1/2 which in turn facilitates the incorporation of the mature MT-CO2/COX2 into the assembling CIV holoenzyme. This chain is Cytochrome c oxidase assembly protein COX20, mitochondrial (COX20), found in Homo sapiens (Human).